Here is a 335-residue protein sequence, read N- to C-terminus: tRNA N6-adenosine threonylcarbamoyltransferase (335 aa).

2 residues coordinate Fe cation: histidine 110 and histidine 114. Residues 132-136 (LVSGG), aspartate 165, glycine 178, and asparagine 271 contribute to the substrate site. Residue aspartate 299 coordinates Fe cation.

This sequence belongs to the KAE1 / TsaD family. Fe(2+) serves as cofactor.

It is found in the cytoplasm. It catalyses the reaction L-threonylcarbamoyladenylate + adenosine(37) in tRNA = N(6)-L-threonylcarbamoyladenosine(37) in tRNA + AMP + H(+). In terms of biological role, required for the formation of a threonylcarbamoyl group on adenosine at position 37 (t(6)A37) in tRNAs that read codons beginning with adenine. Is involved in the transfer of the threonylcarbamoyl moiety of threonylcarbamoyl-AMP (TC-AMP) to the N6 group of A37, together with TsaE and TsaB. TsaD likely plays a direct catalytic role in this reaction. The chain is tRNA N6-adenosine threonylcarbamoyltransferase from Campylobacter jejuni subsp. jejuni serotype O:2 (strain ATCC 700819 / NCTC 11168).